The following is a 362-amino-acid chain: Protein RecA (362 aa).

65 to 72 serves as a coordination point for ATP; it reads GPESSGKT. Residues 323-362 are disordered; sequence RVANGMEPLNEKSTKETADDKASGKTGENKQETIEEASKE. Positions 331 to 362 are enriched in basic and acidic residues; that stretch reads LNEKSTKETADDKASGKTGENKQETIEEASKE.

It belongs to the RecA family.

It localises to the cytoplasm. Its function is as follows. Can catalyze the hydrolysis of ATP in the presence of single-stranded DNA, the ATP-dependent uptake of single-stranded DNA by duplex DNA, and the ATP-dependent hybridization of homologous single-stranded DNAs. It interacts with LexA causing its activation and leading to its autocatalytic cleavage. This chain is Protein RecA, found in Limosilactobacillus reuteri (strain DSM 20016) (Lactobacillus reuteri).